Here is an 831-residue protein sequence, read N- to C-terminus: Phenylalanine--tRNA ligase beta subunit (831 aa).

Positions 42 to 157 constitute a tRNA-binding domain; sequence ADISGPIVVG…GFAEPGTKAD (116 aa). The 76-residue stretch at 408 to 483 folds into the B5 domain; that stretch reads VPREPIVVRA…RNEGYENIPA (76 aa). Residues D461, D467, E470, and E471 each coordinate Mg(2+). The 94-residue stretch at 737 to 830 folds into the FDX-ACB domain; that stretch reads STYPVATQDV…AAERTGAVLR (94 aa).

This sequence belongs to the phenylalanyl-tRNA synthetase beta subunit family. Type 1 subfamily. In terms of assembly, tetramer of two alpha and two beta subunits. It depends on Mg(2+) as a cofactor.

The protein resides in the cytoplasm. The enzyme catalyses tRNA(Phe) + L-phenylalanine + ATP = L-phenylalanyl-tRNA(Phe) + AMP + diphosphate + H(+). The sequence is that of Phenylalanine--tRNA ligase beta subunit from Thermobifida fusca (strain YX).